The following is a 64-amino-acid chain: DNA gyrase inhibitor YacG (64 aa).

Zn(2+) contacts are provided by Cys-7, Cys-10, Cys-26, and Cys-30. The disordered stretch occupies residues 44–64; sequence RIPGEIDPELLPYPEEGEQWQ.

This sequence belongs to the DNA gyrase inhibitor YacG family. As to quaternary structure, interacts with GyrB. Zn(2+) serves as cofactor.

Functionally, inhibits all the catalytic activities of DNA gyrase by preventing its interaction with DNA. Acts by binding directly to the C-terminal domain of GyrB, which probably disrupts DNA binding by the gyrase. The sequence is that of DNA gyrase inhibitor YacG from Aeromonas hydrophila subsp. hydrophila (strain ATCC 7966 / DSM 30187 / BCRC 13018 / CCUG 14551 / JCM 1027 / KCTC 2358 / NCIMB 9240 / NCTC 8049).